The chain runs to 226 residues: 3-dehydroquinate dehydratase (226 aa).

Residues Ser-9, 32–34 (EVR), and Arg-59 contribute to the 3-dehydroquinate site. Catalysis depends on His-119, which acts as the Proton donor/acceptor. Lys-146 functions as the Schiff-base intermediate with substrate in the catalytic mechanism. 3-dehydroquinate-binding residues include Arg-187, Thr-208, and Gln-212.

The protein belongs to the type-I 3-dehydroquinase family. Homodimer.

It catalyses the reaction 3-dehydroquinate = 3-dehydroshikimate + H2O. It participates in metabolic intermediate biosynthesis; chorismate biosynthesis; chorismate from D-erythrose 4-phosphate and phosphoenolpyruvate: step 3/7. Its function is as follows. Involved in the third step of the chorismate pathway, which leads to the biosynthesis of aromatic amino acids. Catalyzes the cis-dehydration of 3-dehydroquinate (DHQ) and introduces the first double bond of the aromatic ring to yield 3-dehydroshikimate. The chain is 3-dehydroquinate dehydratase from Desulfotalea psychrophila (strain LSv54 / DSM 12343).